Reading from the N-terminus, the 424-residue chain is Adenylosuccinate synthetase (424 aa).

Residues 12–18 (GDEGKGK) and 40–42 (GHT) contribute to the GTP site. D13 acts as the Proton acceptor in catalysis. The Mg(2+) site is built by D13 and G40. IMP contacts are provided by residues 13-16 (DEGK), 38-41 (NAGH), T130, R144, N220, T235, and R299. H41 acts as the Proton donor in catalysis. Substrate is bound at residue 295–301 (VTTGRKR). GTP-binding positions include R301, 327 to 329 (KLD), and 412 to 414 (GTG).

It belongs to the adenylosuccinate synthetase family. As to quaternary structure, homodimer. It depends on Mg(2+) as a cofactor.

Its subcellular location is the cytoplasm. It catalyses the reaction IMP + L-aspartate + GTP = N(6)-(1,2-dicarboxyethyl)-AMP + GDP + phosphate + 2 H(+). It participates in purine metabolism; AMP biosynthesis via de novo pathway; AMP from IMP: step 1/2. Its function is as follows. Plays an important role in the de novo pathway and in the salvage pathway of purine nucleotide biosynthesis. Catalyzes the first committed step in the biosynthesis of AMP from IMP. The sequence is that of Adenylosuccinate synthetase (adB) from Emericella nidulans (strain FGSC A4 / ATCC 38163 / CBS 112.46 / NRRL 194 / M139) (Aspergillus nidulans).